A 441-amino-acid polypeptide reads, in one-letter code: DILAAFRVTPQPGVPPEEAGAAVAAESSTGTWTTVWTDGLTSLDRYKGRCYHIEPVAGEESQFIAYVAYPLDLFEEGSVTNMFTSIVGNVFGFKALRALRLEDLRIPPAYVKTFQGPPHGIQVERDKLNKYGRPLLGCTIKPKLGLSAKNYGRAVYECLRGGLDFTKDDENVNSQPFMRWRDRFLFCAEALYKAQAETGEIKGHYLNATAGTCEEMIKRAVFARELGVPIVMHDYLTGGFTANTSLAHYCRDNGLLLHIHRAMHAVIDRQKNHGIHFRVLAKALRMSGGDHIHSGTVVGKLEGEREITLGFVDLLRDDFIEKDRSRGIYFTQDWVSLPGVLPVASGGIHVWHMPALTEIFGDDSVLQFGGGTLGHPWGNAPGAVANRVALEACVQARNEGRDLAREGNEIIREASKWSPELAAACEVWKEIKFEFEAMDTL.

Substrate-binding residues include Asn-89 and Thr-139. Residue Lys-141 is the Proton acceptor of the active site. Substrate is bound at residue Lys-143. Mg(2+) is bound by residues Lys-167, Asp-169, and Glu-170. Lys-167 is modified (N6-carboxylysine). The active-site Proton acceptor is the His-260. Substrate contacts are provided by Arg-261, His-293, and Ser-345.

The protein belongs to the RuBisCO large chain family. Type I subfamily. As to quaternary structure, heterohexadecamer of 8 large chains and 8 small chains; disulfide-linked. The disulfide link is formed within the large subunit homodimers. Mg(2+) serves as cofactor. Post-translationally, the disulfide bond which can form in the large chain dimeric partners within the hexadecamer appears to be associated with oxidative stress and protein turnover.

It localises to the plastid. Its subcellular location is the chloroplast. It catalyses the reaction 2 (2R)-3-phosphoglycerate + 2 H(+) = D-ribulose 1,5-bisphosphate + CO2 + H2O. It carries out the reaction D-ribulose 1,5-bisphosphate + O2 = 2-phosphoglycolate + (2R)-3-phosphoglycerate + 2 H(+). Functionally, ruBisCO catalyzes two reactions: the carboxylation of D-ribulose 1,5-bisphosphate, the primary event in carbon dioxide fixation, as well as the oxidative fragmentation of the pentose substrate in the photorespiration process. Both reactions occur simultaneously and in competition at the same active site. This chain is Ribulose bisphosphate carboxylase large chain, found in Polemonium reptans (Greek valerian).